Consider the following 363-residue polypeptide: Heat-inducible transcription repressor HrcA (363 aa).

The protein belongs to the HrcA family.

Functionally, negative regulator of class I heat shock genes (grpE-dnaK-dnaJ and groELS operons). Prevents heat-shock induction of these operons. This is Heat-inducible transcription repressor HrcA from Rhizobium radiobacter (Agrobacterium tumefaciens).